Consider the following 233-residue polypeptide: Eukaryotic translation initiation factor 4E-1 (233 aa).

The interval 1–51 (MVVEDALKTSASEDQAKTETNPKPREEDDEPEEGEIVGDEESASKPSKGIA) is disordered. Basic and acidic residues predominate over residues 14-26 (DQAKTETNPKPRE). The segment covering 27-41 (EDDEPEEGEIVGDEE) has biased composition (acidic residues). EIF4G-binding stretches follow at residues 55 to 58 (HALE) and 65 to 104 (FDSP…NNIR). MRNA is bound by residues 76–81 (KQEDWG), K108, and 126–127 (WE). Residues C131 and C169 are joined by a disulfide bond. Positions 152–161 (YTLLGMIGEQ) are EIF4G-binding. Residues 176–181 (RNRQEK) and 221–225 (MRHER) contribute to the mRNA site.

The protein belongs to the eukaryotic initiation factor 4E family. EIF4F is a multi-subunit complex, the composition of which varies with external and internal environmental conditions. It is composed of at least EIF4A, EIF4E and EIF4G. EIF4E is also known to interact with other partners. In higher plants two isoforms of EIF4F have been identified, named isoform EIF4F and isoform EIF(iso)4F. Isoform EIF4F has subunits p220 and p26, whereas isoform EIF(iso)4F has subunits p82 and p28. In terms of assembly, (Microbial infection) Does not interact with the VPg of Plum pox virus (PPV) strain D. In terms of processing, according to the redox status, the Cys-131-Cys-169 disulfide bridge may have a role in regulating protein function by affecting its ability to bind capped mRNA. As to expression, mostly expressed in leaves, flower buds, leaf buds and anthers, to a lower extent in roots, stems and green immature fruit, and, at low levels, in petals.

The protein resides in the nucleus. Its subcellular location is the cytoplasm. In terms of biological role, component of the protein complex eIF4F, which is involved in the recognition of the mRNA cap, ATP-dependent unwinding of 5'-terminal secondary structure and recruitment of mRNA to the ribosome. Recognizes and binds the 7-methylguanosine-containing mRNA cap during an early step in the initiation of protein synthesis and facilitates ribosome binding by inducing the unwinding of the mRNAs secondary structures. Functionally, (Microbial infection) Not involved in the plum pox virus (PPV) strain D infection process. The polypeptide is Eukaryotic translation initiation factor 4E-1 (Prunus domestica (Garden plum)).